The chain runs to 547 residues: Oncoprotein-induced transcript 3 protein (547 aa).

Residues methionine 1–proline 19 form the signal peptide. Residues asparagine 89 and asparagine 116 are each glycosylated (N-linked (GlcNAc...) asparagine). The region spanning aspartate 182 to glutamate 222 is the EGF-like; calcium-binding domain. 3 cysteine pairs are disulfide-bonded: cysteine 186–cysteine 197, cysteine 193–cysteine 206, and cysteine 208–cysteine 221. The ZP domain occupies phenylalanine 267–arginine 516. Asparagine 299 carries an N-linked (GlcNAc...) asparagine glycan. Residues glutamate 520 to aspartate 547 form a disordered region.

It is found in the nucleus envelope. Its function is as follows. May be involved in hepatocellular function and development. This chain is Oncoprotein-induced transcript 3 protein (OIT3), found in Bos taurus (Bovine).